We begin with the raw amino-acid sequence, 274 residues long: Dermonecrotic toxin SdSicTox-betaIIB1aii (274 aa).

H5 is an active-site residue. The Mg(2+) site is built by E25 and D27. H41 (nucleophile) is an active-site residue. Disulfide bonds link C45-C51 and C47-C190. Residue D85 coordinates Mg(2+).

Belongs to the arthropod phospholipase D family. Class II subfamily. The cofactor is Mg(2+). Expressed by the venom gland.

The protein localises to the secreted. The enzyme catalyses an N-(acyl)-sphingosylphosphocholine = an N-(acyl)-sphingosyl-1,3-cyclic phosphate + choline. It carries out the reaction an N-(acyl)-sphingosylphosphoethanolamine = an N-(acyl)-sphingosyl-1,3-cyclic phosphate + ethanolamine. The catalysed reaction is a 1-acyl-sn-glycero-3-phosphocholine = a 1-acyl-sn-glycero-2,3-cyclic phosphate + choline. It catalyses the reaction a 1-acyl-sn-glycero-3-phosphoethanolamine = a 1-acyl-sn-glycero-2,3-cyclic phosphate + ethanolamine. Its function is as follows. Dermonecrotic toxins cleave the phosphodiester linkage between the phosphate and headgroup of certain phospholipids (sphingolipid and lysolipid substrates), forming an alcohol (often choline) and a cyclic phosphate. This toxin acts on sphingomyelin (SM). It may also act on ceramide phosphoethanolamine (CPE), lysophosphatidylcholine (LPC) and lysophosphatidylethanolamine (LPE), but not on lysophosphatidylserine (LPS), and lysophosphatidylglycerol (LPG). It acts by transphosphatidylation, releasing exclusively cyclic phosphate products as second products. Induces dermonecrosis, hemolysis, increased vascular permeability, edema, inflammatory response, and platelet aggregation. The chain is Dermonecrotic toxin SdSicTox-betaIIB1aii from Sicarius cf. damarensis (strain GJB-2008) (Six-eyed sand spider).